The sequence spans 217 residues: Large ribosomal subunit protein bL25 (217 aa).

The tract at residues 178–217 (VVAPTEEPTEEEIEAMEGEQQTEEPEVVGESKEDEEKTEE) is disordered. Acidic residues predominate over residues 184-205 (EPTEEEIEAMEGEQQTEEPEVV). The span at 206 to 217 (GESKEDEEKTEE) shows a compositional bias: basic and acidic residues.

This sequence belongs to the bacterial ribosomal protein bL25 family. CTC subfamily. Part of the 50S ribosomal subunit; part of the 5S rRNA/L5/L18/L25 subcomplex. Contacts the 5S rRNA. Binds to the 5S rRNA independently of L5 and L18.

Functionally, this is one of the proteins that binds to the 5S RNA in the ribosome where it forms part of the central protuberance. In Staphylococcus aureus (strain USA300), this protein is Large ribosomal subunit protein bL25.